The sequence spans 429 residues: TNFAIP3-interacting protein 2 (429 aa).

At S7 the chain carries Phosphoserine. Residues 29–117 (QRLRRLQDQL…MQQLLSQPQH (89 aa)) adopt a coiled-coil conformation. Residues 177–195 (HAQRNVGERSPDQSEHTDG) show a composition bias toward basic and acidic residues. Residues 177-199 (HAQRNVGERSPDQSEHTDGHTSV) are disordered. Coiled coils occupy residues 196 to 226 (HTSV…LNAK) and 255 to 340 (ELMR…QVSW). The ubiquitin-binding domain (UBD) stretch occupies residues 289-347 (RDAALERVQMLEQQILAYKDDFMSERADRERAQSRIQELEEKVASLLHQVSWRQDSREP). Residues 372–400 (PGGWRPGTGSQQPEPPAEGGHPGAAQRGQ) are disordered. The span at 388 to 397 (AEGGHPGAAQ) shows a compositional bias: low complexity. The CCHC NOA-type zinc finger occupies 397-429 (QRGQGDLQCPHCLQCFSDEQGEELLRHVAECCQ). Zn(2+) contacts are provided by C405, C408, H423, and C427.

In terms of assembly, interacts with STK11/LKB1, TNFAIP3, IKBKG, NFKB1, MAP3K8, TEK, RIPK1, CHUK, IKBKB and SMARCD1. Interacts with polyubiquitin. (Microbial infection) Interacts with severe fever with thrombocytopenia syndrome virus (SFTSV) NSs; this interaction promotes TPL2 complex formation and signaling activity leading to IL-10 production. In terms of processing, in vitro phosphorylated by CHUK. Post-translationally, ubiquitinated; undergoes 'Lys-48'-linked polyubiquitination probably leading to constitutive proteasomal degradation which can be impaired by IKK-A/CHUK or IKBKB probably involving deubiquitination. Deubiquitinated by USP35; leading to stabilization and inhibition of TNFalpha-induced NF-kappa-B activation. In terms of tissue distribution, ubiquitously expressed in all tissues examined.

Its subcellular location is the cytoplasm. It localises to the nucleus. In terms of biological role, inhibits NF-kappa-B activation by blocking the interaction of RIPK1 with its downstream effector NEMO/IKBKG. Forms a ternary complex with NFKB1 and MAP3K8 but appears to function upstream of MAP3K8 in the TLR4 signaling pathway that regulates MAP3K8 activation. Involved in activation of the MEK/ERK signaling pathway during innate immune response; this function seems to be stimulus- and cell type specific. Required for stability of MAP3K8. Involved in regulation of apoptosis in endothelial cells; promotes TEK agonist-stimulated endothelial survival. May act as transcriptional coactivator when translocated to the nucleus. Enhances CHUK-mediated NF-kappa-B activation involving NF-kappa-B p50-p65 and p50-c-Rel complexes. This Homo sapiens (Human) protein is TNFAIP3-interacting protein 2.